A 336-amino-acid polypeptide reads, in one-letter code: Large ribosomal subunit protein uL1 (336 aa).

Residues 1–245 (MANQKKVTNK…VKKTAKGKVI (245 aa)) form a large ribosomal subunit protein uL1 region. The interval 246 to 336 (ADDSAKGENK…DVKKAKTSKK (91 aa)) is unknown. A disordered region spans residues 267-336 (AQKKKPSKHP…DVKKAKTSKK (70 aa)). Residues 286–305 (KKKKVKKILKKAKPAKKAAV) show a composition bias toward basic residues. The span at 306–315 (AKKPVVVNKK) shows a compositional bias: low complexity.

It belongs to the universal ribosomal protein uL1 family. As to quaternary structure, part of the 50S ribosomal subunit.

Binds directly to 23S rRNA. The L1 stalk is quite mobile in the ribosome, and is involved in E site tRNA release. Its function is as follows. Protein L1 is also a translational repressor protein, it controls the translation of the L11 operon by binding to its mRNA. The sequence is that of Large ribosomal subunit protein uL1 from Malacoplasma penetrans (strain HF-2) (Mycoplasma penetrans).